The sequence spans 537 residues: Cytochrome c oxidase subunit 1 (537 aa).

Residues 22 to 42 (ILYLLFGLVSGIIGSVFSFII) traverse the membrane as a helical segment. Positions 45, 48, and 50 each coordinate Ca(2+). Histidine 68 is a binding site for Fe(II)-heme a. The next 8 membrane-spanning stretches (helical) occupy residues 70 to 90 (ILMIFFFIIPALFGAFGNYLV), 104 to 124 (VNNFTFWLLPPALMLLLISAL), 152 to 172 (LAILSLQLTGISSTLGSVNLI), 190 to 210 (LFAWAIMITSILLLLTLPVLA), 241 to 261 (LFWFFGHPEVYILIMPAFGVV), 279 to 299 (MLWAMLSIALLGLMVWSHHLF), 318 to 338 (IAIPTGIKIFSWLATLTGGAI), and 345 to 365 (MLYAIGFLILFTIGGLTGVIL). Histidine 247 contributes to the Cu cation binding site. The segment at residues 247 to 251 (HPEVY) is a cross-link (1'-histidyl-3'-tyrosine (His-Tyr)). Position 251 (tyrosine 251) interacts with O2. Residues histidine 296 and histidine 297 each coordinate Cu cation. Residues histidine 375 and aspartate 376 each contribute to the Mg(2+) site. 2 consecutive transmembrane segments (helical) span residues 379–399 (FVVAHFHYVLSMGALFGLCGA) and 418–438 (IQFWILFIGVNIVFGPQHFLG). Histidine 383 is a heme a3 binding site. Histidine 385 is a Fe(II)-heme a binding site. Proline 447 is a binding site for Ca(2+). The chain crosses the membrane as a helical span at residues 458–478 (FVSSIGSVISILSLFLFMYVM).

It belongs to the heme-copper respiratory oxidase family. In terms of assembly, component of the cytochrome c oxidase (complex IV, CIV), a multisubunit enzyme composed of a catalytic core of 3 subunits and several supernumerary subunits. The complex exists as a monomer or a dimer and forms supercomplexes (SCs) in the inner mitochondrial membrane with ubiquinol-cytochrome c oxidoreductase (cytochrome b-c1 complex, complex III, CIII). Requires heme as cofactor. It depends on Cu cation as a cofactor.

It is found in the mitochondrion inner membrane. The catalysed reaction is 4 Fe(II)-[cytochrome c] + O2 + 8 H(+)(in) = 4 Fe(III)-[cytochrome c] + 2 H2O + 4 H(+)(out). It participates in energy metabolism; oxidative phosphorylation. In terms of biological role, component of the cytochrome c oxidase, the last enzyme in the mitochondrial electron transport chain which drives oxidative phosphorylation. The respiratory chain contains 3 multisubunit complexes succinate dehydrogenase (complex II, CII), ubiquinol-cytochrome c oxidoreductase (cytochrome b-c1 complex, complex III, CIII) and cytochrome c oxidase (complex IV, CIV), that cooperate to transfer electrons derived from NADH and succinate to molecular oxygen, creating an electrochemical gradient over the inner membrane that drives transmembrane transport and the ATP synthase. Cytochrome c oxidase is the component of the respiratory chain that catalyzes the reduction of oxygen to water. Electrons originating from reduced cytochrome c in the intermembrane space (IMS) are transferred via the dinuclear copper A center (CU(A)) of subunit 2 and heme A of subunit 1 to the active site in subunit 1, a binuclear center (BNC) formed by heme A3 and copper B (CU(B)). The BNC reduces molecular oxygen to 2 water molecules using 4 electrons from cytochrome c in the IMS and 4 protons from the mitochondrial matrix. The chain is Cytochrome c oxidase subunit 1 (cox1) from Schizosaccharomyces pombe (strain 972 / ATCC 24843) (Fission yeast).